The primary structure comprises 264 residues: Apolipoprotein A-I (264 aa).

A signal peptide spans 1-18 (MRGVLVTLAVLFLTGTQA). Repeat copies occupy residues 67 to 88 (LKLA…EDMA) and 89 to 110 (PYYK…AELT). The tract at residues 67-264 (LKLADNLDTL…FLDELQKSVA (198 aa)) is 10 X approximate tandem repeats. Residues 111-121 (KDLEEVKEKIR) form a 3; half-length repeat. Tandem repeats lie at residues 122–143 (PFLD…QRLT), 144–165 (PVAQ…AKLT), 166–187 (PVAE…KNLA), 188–209 (PYSD…EKGI), and 210–231 (PQAS…EKMT). The 9; half-length repeat unit spans residues 232 to 242 (PLVQEFRERLT). Residues 243-264 (PYAENLKNRLISFLDELQKSVA) form repeat 10.

This sequence belongs to the apolipoprotein A1/A4/E family. As to quaternary structure, homodimer. Major protein of plasma HDL, also found in chylomicrons.

Its subcellular location is the secreted. In terms of biological role, participates in the reverse transport of cholesterol from tissues to the liver for excretion by promoting cholesterol efflux from tissues and by acting as a cofactor for the lecithin cholesterol acyltransferase (LCAT). The sequence is that of Apolipoprotein A-I (APOA1) from Gallus gallus (Chicken).